A 345-amino-acid chain; its full sequence is NADPH-dependent curcumin reductase (345 aa).

A compositionally biased stretch (basic residues) spans 1-10; it reads MGQQKQRNRR. Residues 1-24 form a disordered region; it reads MGQQKQRNRRWVLASRPHGAPVPE. 3 residues coordinate NADP(+): lysine 186, asparagine 225, and asparagine 333.

In terms of assembly, homodimer.

The enzyme catalyses tetrahydrocurcumin + 2 NADP(+) = curcumin + 2 NADPH + 2 H(+). It carries out the reaction tetrahydrocurcumin + NADP(+) = dihydrocurcumin + NADPH + H(+). It catalyses the reaction dihydrocurcumin + NADP(+) = curcumin + NADPH + H(+). Its activity is regulated as follows. Inhibited by thiol-specific reagents (p-chloromercuribenzoate and 5,5'-dithio-bis-2-nitrobenzoate). Catalyzes the metal-independent reduction of curcumin to dihydrocurcumin (DHC) as an intermediate product, followed by further reduction to tetrahydrocurcumin (THC) as an end product. It also acts on 3-octene-2-one, 3-hepten-2-one, resveratrol, and trans-2-octenal. This is NADPH-dependent curcumin reductase from Escherichia coli (strain K12).